The chain runs to 73 residues: Translation initiation factor IF-1 1 (73 aa).

The region spanning 1–72 (MAKEELIEFG…TKGRINFRHK (72 aa)) is the S1-like domain.

Belongs to the IF-1 family. Component of the 30S ribosomal translation pre-initiation complex which assembles on the 30S ribosome in the order IF-2 and IF-3, IF-1 and N-formylmethionyl-tRNA(fMet); mRNA recruitment can occur at any time during PIC assembly.

The protein localises to the cytoplasm. One of the essential components for the initiation of protein synthesis. Stabilizes the binding of IF-2 and IF-3 on the 30S subunit to which N-formylmethionyl-tRNA(fMet) subsequently binds. Helps modulate mRNA selection, yielding the 30S pre-initiation complex (PIC). Upon addition of the 50S ribosomal subunit IF-1, IF-2 and IF-3 are released leaving the mature 70S translation initiation complex. This is Translation initiation factor IF-1 1 from Cupriavidus pinatubonensis (strain JMP 134 / LMG 1197) (Cupriavidus necator (strain JMP 134)).